Here is a 339-residue protein sequence, read N- to C-terminus: tRNA N6-adenosine threonylcarbamoyltransferase (339 aa).

Histidine 114 and histidine 118 together coordinate Fe cation. Substrate-binding positions include valine 137–glycine 141, aspartate 170, glycine 183, aspartate 187, and asparagine 277. Position 305 (aspartate 305) interacts with Fe cation.

Belongs to the KAE1 / TsaD family. The cofactor is Fe(2+).

The protein localises to the cytoplasm. The enzyme catalyses L-threonylcarbamoyladenylate + adenosine(37) in tRNA = N(6)-L-threonylcarbamoyladenosine(37) in tRNA + AMP + H(+). Functionally, required for the formation of a threonylcarbamoyl group on adenosine at position 37 (t(6)A37) in tRNAs that read codons beginning with adenine. Is involved in the transfer of the threonylcarbamoyl moiety of threonylcarbamoyl-AMP (TC-AMP) to the N6 group of A37, together with TsaE and TsaB. TsaD likely plays a direct catalytic role in this reaction. The protein is tRNA N6-adenosine threonylcarbamoyltransferase of Clostridium beijerinckii (strain ATCC 51743 / NCIMB 8052) (Clostridium acetobutylicum).